The sequence spans 114 residues: Cytochrome c2 (114 aa).

Glutamine 1 bears the Pyrrolidone carboxylic acid mark. Cysteine 13, cysteine 16, histidine 17, and methionine 93 together coordinate heme c.

It belongs to the cytochrome c family. Binds 1 heme c group covalently per subunit.

It localises to the periplasm. Functionally, cytochrome c2 is found mainly in purple, non-sulfur, photosynthetic bacteria where it functions as the electron donor to the oxidized bacteriochlorophyll in the photophosphorylation pathway. However, it may also have a role in the respiratory chain and is found in some non-photosynthetic bacteria. The polypeptide is Cytochrome c2 (Rhodopseudomonas palustris).